The primary structure comprises 137 residues: Basic phospholipase A2 2 (137 aa).

An N-terminal signal peptide occupies residues Leu-1 to Ala-11. Positions Ala-12 to Leu-19 are excised as a propeptide. Intrachain disulfides connect Cys-30–Cys-89, Cys-44–Cys-136, Cys-46–Cys-62, Cys-61–Cys-117, Cys-68–Cys-110, Cys-78–Cys-103, and Cys-96–Cys-108. Ca(2+) contacts are provided by Tyr-45 and Gly-47. Tyr-48 contacts alpha-D-mannopyranose. Gly-49 is a binding site for Ca(2+). The active site involves His-65. Residue Asp-66 coordinates Ca(2+). Alpha-D-mannopyranose is bound at residue Asp-66. The active site involves Asp-111.

It belongs to the phospholipase A2 family. Group I subfamily. D49 sub-subfamily. Homodimer; non-covalently linked. Ca(2+) is required as a cofactor. In terms of processing, homodimerization and interaction of the catalytically important Asp-49 (here Asp-111) with mannose molecules may render this protein inactive. In terms of tissue distribution, expressed by the venom gland.

It is found in the secreted. It carries out the reaction a 1,2-diacyl-sn-glycero-3-phosphocholine + H2O = a 1-acyl-sn-glycero-3-phosphocholine + a fatty acid + H(+). In terms of biological role, snake venom phospholipase A2 (PLA2) that shows anticoagulant and neurotoxic activities. PLA2 catalyzes the calcium-dependent hydrolysis of the 2-acyl groups in 3-sn-phosphoglycerides. The sequence is that of Basic phospholipase A2 2 from Bungarus caeruleus (Indian krait).